The chain runs to 141 residues: Arsenate reductase (141 aa).

Cys12 acts as the Nucleophile; cysteine thioarsenate intermediate in catalysis.

This sequence belongs to the ArsC family.

The catalysed reaction is [glutaredoxin]-dithiol + arsenate + glutathione + H(+) = glutathionyl-S-S-[glutaredoxin] + arsenite + H2O. Its function is as follows. Involved in resistance to arsenate. Catalyzes the reduction of arsenate [As(V)] to arsenite [As(III)]. The sequence is that of Arsenate reductase from Escherichia coli (strain K12).